The chain runs to 416 residues: Muscle-specific homeobox protein tinman (416 aa).

2 stretches are compositionally biased toward polar residues: residues 1 to 11 (MLQHHQQQAQS) and 18 to 33 (YTQS…ADAL). 3 disordered regions span residues 1–33 (MLQH…ADAL), 246–305 (TASN…RKPR), and 391–416 (VMWP…MQHM). Residues 281-295 (NSISGNSNPGSNSGS) show a composition bias toward low complexity. Positions 301–360 (KRKPRVLFSQAQVLELECRFRLKKYLTGAEREIIAQKLNLSATQVKIWFQNRRYKSKRGD) form a DNA-binding region, homeobox. Residues 397-416 (MQQSQQQQQHHAQQQQMQHM) are compositionally biased toward low complexity.

It is found in the nucleus. Its function is as follows. Required for the development of heart and visceral muscle; for the formation of somatic muscles. Has a crucial function in the early mesodermal subdivisions. The polypeptide is Muscle-specific homeobox protein tinman (tin) (Drosophila melanogaster (Fruit fly)).